Consider the following 31-residue polypeptide: Cytochrome b6-f complex subunit 6 (31 aa).

Residues V4–V24 form a helical membrane-spanning segment.

Belongs to the PetL family. As to quaternary structure, the 4 large subunits of the cytochrome b6-f complex are cytochrome b6, subunit IV (17 kDa polypeptide, PetD), cytochrome f and the Rieske protein, while the 4 small subunits are PetG, PetL, PetM and PetN. The complex functions as a dimer.

Its subcellular location is the plastid. It localises to the chloroplast thylakoid membrane. Its function is as follows. Component of the cytochrome b6-f complex, which mediates electron transfer between photosystem II (PSII) and photosystem I (PSI), cyclic electron flow around PSI, and state transitions. PetL is important for photoautotrophic growth as well as for electron transfer efficiency and stability of the cytochrome b6-f complex. The sequence is that of Cytochrome b6-f complex subunit 6 from Mesostigma viride (Green alga).